The sequence spans 540 residues: Protein dml-1 (540 aa).

The interval 517–540 (NELAEMADEYHEGWSSGSDDGDDD) is disordered.

The protein belongs to the misato family.

Its subcellular location is the mitochondrion. Its function is as follows. Involved in the partitioning of the mitochondrial organelle and mitochondrial DNA (mtDNA) inheritance. The protein is Protein dml-1 (dml-1) of Neurospora crassa (strain ATCC 24698 / 74-OR23-1A / CBS 708.71 / DSM 1257 / FGSC 987).